A 477-amino-acid polypeptide reads, in one-letter code: Aspartyl/glutamyl-tRNA(Asn/Gln) amidotransferase subunit B (477 aa).

This sequence belongs to the GatB/GatE family. GatB subfamily. In terms of assembly, heterotrimer of A, B and C subunits.

The catalysed reaction is L-glutamyl-tRNA(Gln) + L-glutamine + ATP + H2O = L-glutaminyl-tRNA(Gln) + L-glutamate + ADP + phosphate + H(+). The enzyme catalyses L-aspartyl-tRNA(Asn) + L-glutamine + ATP + H2O = L-asparaginyl-tRNA(Asn) + L-glutamate + ADP + phosphate + 2 H(+). Its function is as follows. Allows the formation of correctly charged Asn-tRNA(Asn) or Gln-tRNA(Gln) through the transamidation of misacylated Asp-tRNA(Asn) or Glu-tRNA(Gln) in organisms which lack either or both of asparaginyl-tRNA or glutaminyl-tRNA synthetases. The reaction takes place in the presence of glutamine and ATP through an activated phospho-Asp-tRNA(Asn) or phospho-Glu-tRNA(Gln). This is Aspartyl/glutamyl-tRNA(Asn/Gln) amidotransferase subunit B from Lactococcus lactis subsp. cremoris (strain SK11).